The chain runs to 447 residues: Cobyrinate a,c-diamide synthase (447 aa).

A GATase cobBQ-type domain is found at 252 to 439 (KIAVAFDESF…AHQHCIGNPY (188 aa)). Cys-331 acts as the Nucleophile in catalysis.

This sequence belongs to the CobB/CbiA family. Mg(2+) is required as a cofactor.

The enzyme catalyses cob(II)yrinate + 2 L-glutamine + 2 ATP + 2 H2O = cob(II)yrinate a,c diamide + 2 L-glutamate + 2 ADP + 2 phosphate + 2 H(+). It catalyses the reaction Ni-sirohydrochlorin + 2 L-glutamine + 2 ATP + 2 H2O = Ni-sirohydrochlorin a,c-diamide + 2 L-glutamate + 2 ADP + 2 phosphate + 2 H(+). It functions in the pathway cofactor biosynthesis; adenosylcobalamin biosynthesis; cob(II)yrinate a,c-diamide from sirohydrochlorin (anaerobic route): step 10/10. Its function is as follows. Catalyzes the ATP-dependent amidation of the two carboxylate groups at positions a and c of cobyrinate, using either L-glutamine or ammonia as the nitrogen source. Involved in the biosynthesis of the unique nickel-containing tetrapyrrole coenzyme F430, the prosthetic group of methyl-coenzyme M reductase (MCR), which plays a key role in methanogenesis and anaerobic methane oxidation. Catalyzes the ATP-dependent amidation of the two carboxylate groups at positions a and c of Ni-sirohydrochlorin, using L-glutamine or ammonia as the nitrogen source. The sequence is that of Cobyrinate a,c-diamide synthase from Methanococcus maripaludis (strain C5 / ATCC BAA-1333).